A 198-amino-acid chain; its full sequence is Recombination protein RecR (198 aa).

The C4-type zinc finger occupies 56–71 (CEICGNVSEQATCSIC). The 96-residue stretch at 79–174 (ALICVVEEAK…RVTRLASGLP (96 aa)) folds into the Toprim domain.

Belongs to the RecR family.

Functionally, may play a role in DNA repair. It seems to be involved in an RecBC-independent recombinational process of DNA repair. It may act with RecF and RecO. This is Recombination protein RecR from Leifsonia xyli subsp. xyli (strain CTCB07).